The primary structure comprises 284 residues: Tropomyosin (284 aa).

Positions 1–284 form a coiled coil; that stretch reads MDAIKKKMQA…DQTFAEIAGY (284 aa). A disordered region spans residues 103–133; the sequence is EEKLATTTEKLEEASKAADESERNRKVLEGR.

Belongs to the tropomyosin family. In terms of assembly, homodimer.

Tropomyosin, in association with the troponin complex, plays a central role in the calcium dependent regulation of muscle contraction. The sequence is that of Tropomyosin from Chlamys nipponensis akazara (Akazara scallop).